Consider the following 494-residue polypeptide: Guanosine-5'-triphosphate,3'-diphosphate pyrophosphatase (494 aa).

It belongs to the GppA/Ppx family. GppA subfamily.

It catalyses the reaction guanosine 3'-diphosphate 5'-triphosphate + H2O = guanosine 3',5'-bis(diphosphate) + phosphate + H(+). It participates in purine metabolism; ppGpp biosynthesis; ppGpp from GTP: step 2/2. Functionally, catalyzes the conversion of pppGpp to ppGpp. Guanosine pentaphosphate (pppGpp) is a cytoplasmic signaling molecule which together with ppGpp controls the 'stringent response', an adaptive process that allows bacteria to respond to amino acid starvation, resulting in the coordinated regulation of numerous cellular activities. The sequence is that of Guanosine-5'-triphosphate,3'-diphosphate pyrophosphatase from Escherichia fergusonii (strain ATCC 35469 / DSM 13698 / CCUG 18766 / IAM 14443 / JCM 21226 / LMG 7866 / NBRC 102419 / NCTC 12128 / CDC 0568-73).